Consider the following 27-residue polypeptide: DELTA-pseudomyrmecitoxin-Pp1a subunit A (27 aa).

Heterodimer composed of subunit A and subunit B (DELTA-PSDTX-Pp1a); disulfide-linked. Expressed by the venom gland.

Its subcellular location is the secreted. Its function is as follows. This heterodimer has insecticidal and cytotoxic properties. Induces immediate paralysis when injected into blowflies (Lucilia cuprina), and then death within 24 hours. Also inhibits the growth of Aedes albopictus mosquito C6/36 cells. The chain is DELTA-pseudomyrmecitoxin-Pp1a subunit A from Pseudomyrmex penetrator (Ant).